The sequence spans 184 residues: MADETKATDAGQRYAQSLFELTIENNQLTKVEADLKSLRAMVAASTDLRRLLESPAFSAEDKAKGLTAVAAKAGFQLLTAKFLGLVASNGRAGDLMGAITAFVEMSAQHRGVVTAEVVTASALTAAQLKGVSTAVASALGKTPEISTRVDPSILGGIKVRVGSRLFDASLRSKLDSLKFALKRA.

This sequence belongs to the ATPase delta chain family. F-type ATPases have 2 components, F(1) - the catalytic core - and F(0) - the membrane proton channel. F(1) has five subunits: alpha(3), beta(3), gamma(1), delta(1), epsilon(1). F(0) has three main subunits: a(1), b(2) and c(10-14). The alpha and beta chains form an alternating ring which encloses part of the gamma chain. F(1) is attached to F(0) by a central stalk formed by the gamma and epsilon chains, while a peripheral stalk is formed by the delta and b chains.

It is found in the cell inner membrane. Functionally, f(1)F(0) ATP synthase produces ATP from ADP in the presence of a proton or sodium gradient. F-type ATPases consist of two structural domains, F(1) containing the extramembraneous catalytic core and F(0) containing the membrane proton channel, linked together by a central stalk and a peripheral stalk. During catalysis, ATP synthesis in the catalytic domain of F(1) is coupled via a rotary mechanism of the central stalk subunits to proton translocation. Its function is as follows. This protein is part of the stalk that links CF(0) to CF(1). It either transmits conformational changes from CF(0) to CF(1) or is implicated in proton conduction. The protein is ATP synthase subunit delta of Caulobacter sp. (strain K31).